A 345-amino-acid chain; its full sequence is Holliday junction branch migration complex subunit RuvB (345 aa).

The segment at 1-22 (MIETDALSGGTPRRLVTQQPLS) is disordered. A large ATPase domain (RuvB-L) region spans residues 4-193 (TDALSGGTPR…FGIVARLEFY (190 aa)). ATP-binding positions include leucine 32, arginine 33, glycine 74, lysine 77, threonine 78, threonine 79, 140–142 (EDY), arginine 183, tyrosine 193, and arginine 230. Residue threonine 78 participates in Mg(2+) binding. The interval 194–264 (TPEELTRIVR…VADAALSMLD (71 aa)) is small ATPAse domain (RuvB-S). The segment at 267–345 (PAGLDVMDRK…HFGFVPPERV (79 aa)) is head domain (RuvB-H). DNA contacts are provided by arginine 322 and arginine 327.

The protein belongs to the RuvB family. In terms of assembly, homohexamer. Forms an RuvA(8)-RuvB(12)-Holliday junction (HJ) complex. HJ DNA is sandwiched between 2 RuvA tetramers; dsDNA enters through RuvA and exits via RuvB. An RuvB hexamer assembles on each DNA strand where it exits the tetramer. Each RuvB hexamer is contacted by two RuvA subunits (via domain III) on 2 adjacent RuvB subunits; this complex drives branch migration. In the full resolvosome a probable DNA-RuvA(4)-RuvB(12)-RuvC(2) complex forms which resolves the HJ.

It localises to the cytoplasm. The enzyme catalyses ATP + H2O = ADP + phosphate + H(+). Functionally, the RuvA-RuvB-RuvC complex processes Holliday junction (HJ) DNA during genetic recombination and DNA repair, while the RuvA-RuvB complex plays an important role in the rescue of blocked DNA replication forks via replication fork reversal (RFR). RuvA specifically binds to HJ cruciform DNA, conferring on it an open structure. The RuvB hexamer acts as an ATP-dependent pump, pulling dsDNA into and through the RuvAB complex. RuvB forms 2 homohexamers on either side of HJ DNA bound by 1 or 2 RuvA tetramers; 4 subunits per hexamer contact DNA at a time. Coordinated motions by a converter formed by DNA-disengaged RuvB subunits stimulates ATP hydrolysis and nucleotide exchange. Immobilization of the converter enables RuvB to convert the ATP-contained energy into a lever motion, pulling 2 nucleotides of DNA out of the RuvA tetramer per ATP hydrolyzed, thus driving DNA branch migration. The RuvB motors rotate together with the DNA substrate, which together with the progressing nucleotide cycle form the mechanistic basis for DNA recombination by continuous HJ branch migration. Branch migration allows RuvC to scan DNA until it finds its consensus sequence, where it cleaves and resolves cruciform DNA. This Laribacter hongkongensis (strain HLHK9) protein is Holliday junction branch migration complex subunit RuvB.